Here is a 203-residue protein sequence, read N- to C-terminus: GTP cyclohydrolase 1 (203 aa).

Residues C87, H90, and C158 each contribute to the Zn(2+) site.

It belongs to the GTP cyclohydrolase I family. As to quaternary structure, homomer.

It catalyses the reaction GTP + H2O = 7,8-dihydroneopterin 3'-triphosphate + formate + H(+). Its pathway is cofactor biosynthesis; 7,8-dihydroneopterin triphosphate biosynthesis; 7,8-dihydroneopterin triphosphate from GTP: step 1/1. The protein is GTP cyclohydrolase 1 of Xylella fastidiosa (strain M23).